We begin with the raw amino-acid sequence, 484 residues long: UBX domain-containing protein 11 (484 aa).

A disordered region spans residues 1–28 (MSSPLASLSKTRKVPLESESVNPGRRGI). Residues 69–147 (HDSELMASMT…IGEMERFLSD (79 aa)) adopt a coiled-coil conformation. An SEP domain is found at 227-291 (LEPIPLKVYR…VSDLRNQIYP (65 aa)). Positions 389–466 (PMPLLSMLRI…GLVPNATLLL (78 aa)) constitute a UBX domain. Phosphoserine occurs at positions 478 and 482.

As to quaternary structure, interacts with GNA12, GNA13, RND1, RND2 and RND3.

It is found in the cytoplasm. Its subcellular location is the cytoskeleton. May be involved in the reorganization of actin cytoskeleton mediated by RND1, RND2 and RND3. Promotes RHOA activation mediated by GNA12 and GNA13. The protein is UBX domain-containing protein 11 (Ubxn11) of Mus musculus (Mouse).